Here is a 265-residue protein sequence, read N- to C-terminus: 4-hydroxy-tetrahydrodipicolinate reductase (265 aa).

NAD(+)-binding positions include 7 to 12 and Asp33; that span reads GASGRM. An NADP(+)-binding site is contributed by Arg34. NAD(+) contacts are provided by residues 96-98 and 120-123; these read GTT and AANM. His153 serves as the catalytic Proton donor/acceptor. Residue His154 participates in (S)-2,3,4,5-tetrahydrodipicolinate binding. Lys157 functions as the Proton donor in the catalytic mechanism. (S)-2,3,4,5-tetrahydrodipicolinate is bound at residue 163 to 164; the sequence is GT.

Belongs to the DapB family.

The protein resides in the cytoplasm. It carries out the reaction (S)-2,3,4,5-tetrahydrodipicolinate + NAD(+) + H2O = (2S,4S)-4-hydroxy-2,3,4,5-tetrahydrodipicolinate + NADH + H(+). The catalysed reaction is (S)-2,3,4,5-tetrahydrodipicolinate + NADP(+) + H2O = (2S,4S)-4-hydroxy-2,3,4,5-tetrahydrodipicolinate + NADPH + H(+). Its pathway is amino-acid biosynthesis; L-lysine biosynthesis via DAP pathway; (S)-tetrahydrodipicolinate from L-aspartate: step 4/4. Functionally, catalyzes the conversion of 4-hydroxy-tetrahydrodipicolinate (HTPA) to tetrahydrodipicolinate. The protein is 4-hydroxy-tetrahydrodipicolinate reductase of Burkholderia orbicola (strain MC0-3).